The primary structure comprises 432 residues: Adenosylhomocysteinase (432 aa).

The tract at residues M1–T24 is disordered. Positions 137 and 162 each coordinate substrate. T163–T165 contacts NAD(+). Substrate contacts are provided by K192 and D196. NAD(+)-binding positions include N197, G226 to G231, E249, N284, A305 to H307, and N352.

This sequence belongs to the adenosylhomocysteinase family. NAD(+) serves as cofactor.

It is found in the cytoplasm. The enzyme catalyses S-adenosyl-L-homocysteine + H2O = L-homocysteine + adenosine. It participates in amino-acid biosynthesis; L-homocysteine biosynthesis; L-homocysteine from S-adenosyl-L-homocysteine: step 1/1. Functionally, may play a key role in the regulation of the intracellular concentration of adenosylhomocysteine. This chain is Adenosylhomocysteinase, found in Haloquadratum walsbyi (strain DSM 16790 / HBSQ001).